The following is a 1265-amino-acid chain: Kinesin-like protein Klp98A (1265 aa).

Residues 3 to 364 (SLKVAVRVRP…LRYANRAKNI (362 aa)) enclose the Kinesin motor domain. 100-107 (GQTGSGKT) contributes to the ATP binding site. Disordered regions lie at residues 597 to 621 (GASP…DPEL), 828 to 864 (EAES…DVSK), and 884 to 954 (VSSP…CTPS). 2 coiled-coil regions span residues 619–670 (PELQ…EEMD) and 768–848 (AQFI…LGNK). Polar residues-rich tracts occupy residues 846–857 (GNKSMSTSTSTN), 884–901 (VSSP…SNCS), and 917–927 (SGSSEETSRTC). Residues 933–946 (SGSGSGSVGIGGSG) are compositionally biased toward gly residues. Positions 1035-1071 (DLNKAQLDEHIADLQDLQRRYIQMEQEMLQSVQDLEA) form a coiled coil. Positions 1129–1259 (GEHFITIPSF…SFFKKGLFEN (131 aa)) constitute a PX domain.

This sequence belongs to the TRAFAC class myosin-kinesin ATPase superfamily. Kinesin family. In terms of assembly, interacts with Atg8a and Rab14.

It localises to the early endosome. Its function is as follows. Plus end-directed motor protein involved in asymmetric cell division of sensory organ precursor (SOP) cells by playing a role in the asymmetric localization of Sara-expressing endosomes to the pIIa daughter cell but not to the pIIb cell. Targets Sara-expressing endosomes to the central spindle which is symmetrically arranged in early cell division. During late cytokinesis, central spindle asymmetry is generated by enrichment of Patronin on the pIIb side which protects microtubules from depolymerization by Klp10A while unprotected microtubules on the pIIa side are disassembled by Klp10A, leading to the asymmetric delivery of Sara-expressing endosomes to the pIIa daughter cell. Also plays a role in regulation of autophagosome formation, fusion and positioning and is required for normal localization of Rab14. This chain is Kinesin-like protein Klp98A, found in Drosophila melanogaster (Fruit fly).